The following is a 205-amino-acid chain: uncharacterized protein (205 aa).

At 1–63 the chain is on the cytoplasmic side; it reads MQRTRELESS…QHPKVAKFLK (63 aa). Residues 64–84 traverse the membrane as a helical segment; that stretch reads VQLVFDLISLFIFATHQLLLL. The Extracellular segment spans residues 85–124; sequence EDGNFGKHYFKRKTKRCSKFSCSRCNANAHHPKWFKFKHS. Residues 125-145 form a helical membrane-spanning segment; that stretch reads LLCLGTFCFGVYSLVKINKFF. Topologically, residues 146–205 are cytoplasmic; that stretch reads KTDQTVDLNRLLELFFWQLNAILNMKLFAFYGDHLESHSAPLDVYEDSFANKSSSGGDEV.

It localises to the membrane. This is an uncharacterized protein from Saccharomyces cerevisiae (strain ATCC 204508 / S288c) (Baker's yeast).